The sequence spans 378 residues: Ribosomal RNA large subunit methyltransferase G (378 aa).

It belongs to the methyltransferase superfamily. RlmG family.

The protein localises to the cytoplasm. The enzyme catalyses guanosine(1835) in 23S rRNA + S-adenosyl-L-methionine = N(2)-methylguanosine(1835) in 23S rRNA + S-adenosyl-L-homocysteine + H(+). Specifically methylates the guanine in position 1835 (m2G1835) of 23S rRNA. The polypeptide is Ribosomal RNA large subunit methyltransferase G (Escherichia coli (strain ATCC 8739 / DSM 1576 / NBRC 3972 / NCIMB 8545 / WDCM 00012 / Crooks)).